Consider the following 188-residue polypeptide: dITP/XTP pyrophosphatase (188 aa).

10–15 (TSNPHK) provides a ligand contact to substrate. Residues glutamate 39 and aspartate 69 each coordinate Mg(2+). Aspartate 69 acts as the Proton acceptor in catalysis. Substrate-binding positions include serine 70, 145–148 (FGFD), lysine 168, and 173–174 (HR).

The protein belongs to the HAM1 NTPase family. As to quaternary structure, homodimer. Mg(2+) is required as a cofactor.

It catalyses the reaction XTP + H2O = XMP + diphosphate + H(+). The enzyme catalyses dITP + H2O = dIMP + diphosphate + H(+). The catalysed reaction is ITP + H2O = IMP + diphosphate + H(+). Its function is as follows. Pyrophosphatase that catalyzes the hydrolysis of nucleoside triphosphates to their monophosphate derivatives, with a high preference for the non-canonical purine nucleotides XTP (xanthosine triphosphate), dITP (deoxyinosine triphosphate) and ITP. Seems to function as a house-cleaning enzyme that removes non-canonical purine nucleotides from the nucleotide pool, thus preventing their incorporation into DNA/RNA and avoiding chromosomal lesions. The chain is dITP/XTP pyrophosphatase from Ignicoccus hospitalis (strain KIN4/I / DSM 18386 / JCM 14125).